The sequence spans 203 residues: Ribonuclease T (203 aa).

In terms of domain architecture, Exonuclease spans 11 to 185 (VVVDVETGGF…YDTEKTAELF (175 aa)). Mg(2+) contacts are provided by Asp14, Glu16, His172, and Asp177. His172 (proton donor/acceptor) is an active-site residue.

The protein belongs to the RNase T family. In terms of assembly, homodimer. Mg(2+) serves as cofactor.

Its function is as follows. Trims short 3' overhangs of a variety of RNA species, leaving a one or two nucleotide 3' overhang. Responsible for the end-turnover of tRNA: specifically removes the terminal AMP residue from uncharged tRNA (tRNA-C-C-A). Also appears to be involved in tRNA biosynthesis. This is Ribonuclease T from Pseudomonas putida (strain ATCC 47054 / DSM 6125 / CFBP 8728 / NCIMB 11950 / KT2440).